The chain runs to 113 residues: MASRAAAGLLLCGVALVFLVLLQGTQSVYIQYQGFRVQLKSVKKLSDLEGQWAPSPRLQAQSPQPSVCHHSALPPDLQPICQSEEAASIFQALRTIAGDDCELCVNVACTGCS.

An N-terminal signal peptide occupies residues 1–27; it reads MASRAAAGLLLCGVALVFLVLLQGTQS. The propeptide occupies 28-97; the sequence is VYIQYQGFRV…SIFQALRTIA (70 aa). Disulfide bonds link cysteine 68/cysteine 81, cysteine 101/cysteine 109, and cysteine 104/cysteine 112.

This sequence belongs to the guanylin family.

Its subcellular location is the secreted. Its function is as follows. Endogenous activator of intestinal guanylate cyclase. It stimulates this enzyme through the same receptor binding region as the heat-stable enterotoxins. May be a potent physiological regulator of intestinal fluid and electrolyte transport. May be an autocrine/paracrine regulator of intestinal salt and water transport. In Sus scrofa (Pig), this protein is Guanylate cyclase activator 2B (GUCA2B).